Consider the following 147-residue polypeptide: Small ribosomal subunit protein uS12 (147 aa).

This sequence belongs to the universal ribosomal protein uS12 family. In terms of assembly, part of the 30S ribosomal subunit.

Functionally, with S4 and S5 plays an important role in translational accuracy. Located at the interface of the 30S and 50S subunits. This Thermofilum pendens (strain DSM 2475 / Hrk 5) protein is Small ribosomal subunit protein uS12.